The following is a 310-amino-acid chain: Mitogen-activated protein kinase kinase 9 (310 aa).

The Protein kinase domain maps to 47–306 (LEKLNVLGCG…APQLLAHPFL (260 aa)). ATP-binding positions include 53–61 (LGCGNGGIV) and Lys76. The active-site Proton acceptor is Asp167. Ser195 and Ser201 each carry phosphoserine. Thr205 bears the Phosphothreonine mark.

Belongs to the protein kinase superfamily. STE Ser/Thr protein kinase family. MAP kinase kinase subfamily. Post-translationally, phosphorylation at Ser-195 and Ser-201 by MAP kinase kinase kinases positively regulates kinase activity. Autophosphorylated.

The protein localises to the cytoplasm. The protein resides in the nucleus. It catalyses the reaction L-seryl-[protein] + ATP = O-phospho-L-seryl-[protein] + ADP + H(+). The catalysed reaction is L-threonyl-[protein] + ATP = O-phospho-L-threonyl-[protein] + ADP + H(+). The enzyme catalyses L-tyrosyl-[protein] + ATP = O-phospho-L-tyrosyl-[protein] + ADP + H(+). Functionally, MKK9-MPK3/MPK6 module phosphorylates and activates EIN3, leading to the promotion of EIN3-mediated transcription in ethylene signaling. Autophosphorylates and also phosphorylates MPK3 and MPK6. Plays an important role in ethylene and camalexin biosynthesis and in salt stress response. MKK9-MPK6 module positively regulates leaf senescence. In Arabidopsis thaliana (Mouse-ear cress), this protein is Mitogen-activated protein kinase kinase 9 (MKK9).